The following is a 274-amino-acid chain: Large ribosomal subunit protein uL2 (274 aa).

2 disordered regions span residues 28-59 (APYAPLLDTKSKSGGRNNNGRITTRHVGGGHK) and 222-274 (GAAM…RRTK). Polar residues predominate over residues 39–49 (KSGGRNNNGRI). Positions 229–239 (DHPHGGGEGRS) are enriched in basic and acidic residues.

The protein belongs to the universal ribosomal protein uL2 family. As to quaternary structure, part of the 50S ribosomal subunit. Forms a bridge to the 30S subunit in the 70S ribosome.

Functionally, one of the primary rRNA binding proteins. Required for association of the 30S and 50S subunits to form the 70S ribosome, for tRNA binding and peptide bond formation. It has been suggested to have peptidyltransferase activity; this is somewhat controversial. Makes several contacts with the 16S rRNA in the 70S ribosome. This is Large ribosomal subunit protein uL2 from Marinomonas sp. (strain MWYL1).